The chain runs to 227 residues: Cytochrome c oxidase subunit 2 (227 aa).

The Mitochondrial intermembrane segment spans residues 1–14 (MAYPFQLGLQDATS). Residues 15–45 (PIMEELLHFHDHTLMIVFLISSLVLYIISSM) form a helical membrane-spanning segment. The Mitochondrial matrix portion of the chain corresponds to 46–59 (LTTKLTHTSTMDAQ). Residues 60 to 87 (EVETVWTILPAIILVLIALPSLRILYMM) form a helical membrane-spanning segment. The Mitochondrial intermembrane portion of the chain corresponds to 88-227 (DEINNPSLTV…YFETWSALML (140 aa)). Residues His161, Cys196, Glu198, Cys200, His204, and Met207 each coordinate Cu cation. A Mg(2+)-binding site is contributed by Glu198. Phosphotyrosine is present on Tyr218.

It belongs to the cytochrome c oxidase subunit 2 family. As to quaternary structure, component of the cytochrome c oxidase (complex IV, CIV), a multisubunit enzyme composed of 14 subunits. The complex is composed of a catalytic core of 3 subunits MT-CO1, MT-CO2 and MT-CO3, encoded in the mitochondrial DNA, and 11 supernumerary subunits COX4I, COX5A, COX5B, COX6A, COX6B, COX6C, COX7A, COX7B, COX7C, COX8 and NDUFA4, which are encoded in the nuclear genome. The complex exists as a monomer or a dimer and forms supercomplexes (SCs) in the inner mitochondrial membrane with NADH-ubiquinone oxidoreductase (complex I, CI) and ubiquinol-cytochrome c oxidoreductase (cytochrome b-c1 complex, complex III, CIII), resulting in different assemblies (supercomplex SCI(1)III(2)IV(1) and megacomplex MCI(2)III(2)IV(2)). Found in a complex with TMEM177, COA6, COX18, COX20, SCO1 and SCO2. Interacts with TMEM177 in a COX20-dependent manner. Interacts with COX20. Interacts with COX16. The cofactor is Cu cation.

The protein localises to the mitochondrion inner membrane. The catalysed reaction is 4 Fe(II)-[cytochrome c] + O2 + 8 H(+)(in) = 4 Fe(III)-[cytochrome c] + 2 H2O + 4 H(+)(out). Its function is as follows. Component of the cytochrome c oxidase, the last enzyme in the mitochondrial electron transport chain which drives oxidative phosphorylation. The respiratory chain contains 3 multisubunit complexes succinate dehydrogenase (complex II, CII), ubiquinol-cytochrome c oxidoreductase (cytochrome b-c1 complex, complex III, CIII) and cytochrome c oxidase (complex IV, CIV), that cooperate to transfer electrons derived from NADH and succinate to molecular oxygen, creating an electrochemical gradient over the inner membrane that drives transmembrane transport and the ATP synthase. Cytochrome c oxidase is the component of the respiratory chain that catalyzes the reduction of oxygen to water. Electrons originating from reduced cytochrome c in the intermembrane space (IMS) are transferred via the dinuclear copper A center (CU(A)) of subunit 2 and heme A of subunit 1 to the active site in subunit 1, a binuclear center (BNC) formed by heme A3 and copper B (CU(B)). The BNC reduces molecular oxygen to 2 water molecules using 4 electrons from cytochrome c in the IMS and 4 protons from the mitochondrial matrix. The protein is Cytochrome c oxidase subunit 2 (MT-CO2) of Speothos venaticus (Bush dog).